Consider the following 333-residue polypeptide: Putative F-box protein At4g11580 (333 aa).

Residues 11-58 (VSEWADLNKDILELIFNKLDVMDITMGASRVCISWFLASHNKTLWNTV) enclose the F-box domain.

This Arabidopsis thaliana (Mouse-ear cress) protein is Putative F-box protein At4g11580.